A 94-amino-acid polypeptide reads, in one-letter code: Ig kappa-B5 chain V region 2699 (94 aa).

Residues 1 to 23 are framework-1; it reads AFELTQTPSSVEAAVGGTVTINC. The interval 24–34 is complementarity-determining-1; sequence QASTDISSNLA. Residues 35-49 form a framework-2 region; that stretch reads WYTPKPGSPPKLLIY. Residues 50-56 are complementarity-determining-2; sequence SASTLAS. The framework-3 stretch occupies residues 57-82; that stretch reads GVSSRFKGSGSGVLITLTISDLECGV. A region of interest (complementarity-determining-3) is located at residue serine 83. Residues 84–93 are framework-4; the sequence is FGGGTKVVVE.

This Oryctolagus cuniculus (Rabbit) protein is Ig kappa-B5 chain V region 2699.